The primary structure comprises 538 residues: Cytochrome P450 monooxygenase flvC (538 aa).

A helical membrane pass occupies residues 17–37; sequence TVLIAGLLVYWVGSAIFLAVL. C478 contacts heme.

The protein belongs to the cytochrome P450 family. Requires heme as cofactor.

The protein resides in the membrane. The enzyme catalyses pre-flavunoidine + reduced [NADPH--hemoprotein reductase] + O2 = 10-hydroxy-pre-flavunoidine + oxidized [NADPH--hemoprotein reductase] + H2O + H(+). It functions in the pathway secondary metabolite biosynthesis; terpenoid biosynthesis. Cytochrome P450 monooxygenase; part of the gene cluster that mediates the biosynthesis of flavunoidine, an alkaloidal terpenoid with a tetracyclic cage-like core connected to dimethylcadaverine via a C-N bond and acylated with 5,5-dimethyl-L-pipecolate. The tetracyclic core is synthesized by the terpene cyclase flvE and the cytochrome P450 monooxygenase flvD. The terpene cyclase flvE catalyzes the cyclization of farnesyl pyrophosphate (FPP) to form (1R,4R,5S)-(+)-acoradiene and the cytochrome P450 monooxygenase flvD is then responsible for oxidative conversion of (1R,4R,5S)-(+)-acoradiene into the tetracyclic cage present in the final product flavunoidine. In parallel, the N-methyltransferase flvH dimethylates L-lysine to give N,N-dimethyl-L-Lysin which is decarboxylated by flvG to afford dimethylcadaverine. The terpene cyclase-like protein flvF is the enzyme that attaches the dimethylcadaverine precusor at the C-7 of the tetracyclic cage to yield pre-flavunoidine. The cytochrome monooxygenase flvC hydroxylates the C-10 position of pre-flavunoidine whereas the NRPS flvI acylates the terpenoid core at the hydroxylated C-10 with dimethylpipecolate to yield final flavunoidine. The bifunctional enzyme flvA and the dehydrogenase flvB are responsible for the synthesis of the dimethylpipecolate precursor. The PLP-dependent lyase domain of flvA might use L-O-acetyl-homoserine and alpha-keto-isovalerate to form an intermediary ketone that can cyclize intramolecularly to yield an imine. The imine can be reduced by flvB to yield the 6-carboxylated pipecolate. The C-terminal alpha-KG-dependent oxygenase domain of flvA is then proposed to catalyze the decarboxylation to yield dimethylpipecolate. This Aspergillus flavus (strain ATCC 200026 / FGSC A1120 / IAM 13836 / NRRL 3357 / JCM 12722 / SRRC 167) protein is Cytochrome P450 monooxygenase flvC.